The primary structure comprises 245 residues: Photosystem II protein PSBS1 (245 aa).

The N-terminal 25 residues, 1-25 (MAMTLSTKAFAQRGVSARKNTVRVY), are a transit peptide targeting the chloroplast. A run of 4 helical transmembrane segments spans residues 72 to 92 (LFVG…EILT), 108 to 128 (GIEV…AAVL), 185 to 205 (LGFA…LAQF), and 217 to 237 (EFGL…EGSG).

Belongs to the ELIP/psbS family.

It is found in the plastid. Its subcellular location is the chloroplast thylakoid membrane. In terms of biological role, required for non-photochemical quenching (NPQ), a mechanism that converts and dissipates the harmful excess absorbed light energy into heat and protect the photosynthetic apparatus from photo-oxidative damage. Seems involved in the activation of NPQ, possibly by promoting conformational changes required for activation of LHCSR3-dependent quenching in the antenna of photosystem II (PSII). In Chlamydomonas reinhardtii (Chlamydomonas smithii), this protein is Photosystem II protein PSBS1.